The following is a 286-amino-acid chain: Undecaprenyl-diphosphatase (286 aa).

Transmembrane regions (helical) follow at residues 50-70, 97-117, 126-146, 156-176, 200-220, 236-256, and 264-284; these read GAAF…VYFW, MGWL…IFQD, LWIV…ADAV, LTYK…IPGV, SFLL…YKVM, LATL…LKFV, and FVWY…FNVI.

Belongs to the UppP family.

The protein resides in the cell membrane. The enzyme catalyses di-trans,octa-cis-undecaprenyl diphosphate + H2O = di-trans,octa-cis-undecaprenyl phosphate + phosphate + H(+). In terms of biological role, catalyzes the dephosphorylation of undecaprenyl diphosphate (UPP). Confers resistance to bacitracin. This is Undecaprenyl-diphosphatase from Arthrobacter sp. (strain FB24).